The following is an 81-amino-acid chain: Putative defensin-like protein 56 (81 aa).

The N-terminal stretch at 1 to 23 (MNITKAYVIFFLVVILTNSLSNS) is a signal peptide. Intrachain disulfides connect C46–C80, C50–C73, C59–C78, and C63–C79.

It belongs to the DEFL family.

It localises to the secreted. This chain is Putative defensin-like protein 56, found in Arabidopsis thaliana (Mouse-ear cress).